Reading from the N-terminus, the 338-residue chain is Solute carrier family 35 member G5 (338 aa).

The interval 1 to 28 (MAGSHPYFNLPDSTHPSPPSGPPSLRWH) is disordered. The next 9 helical transmembrane spans lie at 37–57 (TNGL…VGPL), 67–87 (LPSL…ALLL), 105–125 (CFCA…VQVV), 160–180 (CGLL…LWTL), 190–210 (ALGY…LLVY), 221–241 (TVAF…LFVL), 250–270 (LLSW…FTCV), 281–301 (LVCA…YYML), and 310–330 (IMGA…NLSC). The region spanning 49 to 174 (LPAGFVGPLS…SILGLIIIVG (126 aa)) is the EamA 1 domain. In terms of domain architecture, EamA 2 spans 272-325 (YAVTKAHPALVCAVLHSEVVVALILQYYMLPETVAPSDIMGAGVVLGNITIIPA).

This sequence belongs to the SLC35G solute transporter family.

It localises to the membrane. The polypeptide is Solute carrier family 35 member G5 (SLC35G5) (Gorilla gorilla gorilla (Western lowland gorilla)).